A 1175-amino-acid chain; its full sequence is MAKPYEFNWQKEVPSFLQEGAVFDRYEEESFVFEPNCLFKVDEFGFFLTWRSEGKEGQVLECSLINSIRSGAIPKDPKILAALEAVGKSENDLEGRIVCVCSGTDLVNISFTYMVAENPEVTKQWVEGLRSIIHNFRANNVSPMTCLKKHWMKLAFMTNTNGKIPVRSITRTFASGKTEKVIFQALKELGLPSGKNDEIEPTAFSYEKFYELTQKICPRTDIEDLFKKINGDKTDYLTVDQLVSFLNEHQRDPRLNEILFPFYDAKRAMQIIEMYEPDEDLKKKGLISSDGFCRYLMSDENAPVFLDRLELYQEMDHPLAHYFISSSHNTYLTGRQFGGKSSVEMYRQVLLAGCRCVELDCWDGKGEDQEPIITHGKAMCTDILFKDVIQAIKETAFVTSEYPVILSFENHCSKYQQYKMSKYCEDLFGDLLLKQALESHPLEPGRALPSPNDLKRKILIKNKRLKPEVEKKQLEALRSMMEAGESASPANILEDDNEEEIESADQEEEAHPEFKFGNELSADDLGHKEAVANSVKKGLVTVEDEQAWMASYKYVGATTNIHPYLSTMINYAQPVKFQGFHVAEERNIHYNMSSFNESVGLGYLKTHAIEFVNYNKRQMSRIYPKGGRVDSSNYMPQIFWNAGCQMVSLNYQTPDLAMQLNQGKFEYNGSCGYLLKPDFMRRPDRTFDPFSETPVDGVIAATCSVQVISGQFLSDKKIGTYVEVDMYGLPTDTIRKEFRTRMVMNNGLNPVYNEESFVFRKVILPDLAVLRIAVYDDNNKLIGQRILPLDGLQAGYRHISLRNEGNKPLSLPTIFCNIVLKTYVPDGFGDIVDALSDPKKFLSITEKRADQMRAMGIETSDIADVPSDTSKNDKKGKANTAKANVTPQSSSELRPTTTAALASGVEAKKGIELIPQVRIEDLKQMKAYLKHLKKQQKELNSLKKKHAKEHSTMQKLHCTQVDKIVAQYDKEKSTHEKILEKAMKKKGGSNCLEMKKETEIKIQTLTSDHKSKVKEIVAQHTKEWSEMINTHSAEEQEIRDLHLSQQCELLKKLLINAHEQQTQQLKLSHDRESKEMRAHQAKISMENSKAISQDKSIKNKAERERRVRELNSSNTKKFLEERKRLAMKQSKEMDQLKKVQLEHLEFLEKQNEQAKEMQQMVKLEAEMDRRPATVV.

N-acetylalanine is present on Ala-2. A PI-PLC X-box domain is found at Gln-313 to Lys-463. Active-site residues include His-328 and His-375. A disordered region spans residues Glu-482–His-511. The span at Leu-493–Glu-508 shows a compositional bias: acidic residues. The PI-PLC Y-box domain maps to Leu-565–Arg-681. Residues Asp-684–Leu-809 form the C2 domain. 2 disordered regions span residues Ala-863–Pro-895 and Lys-1082–Leu-1110. Composition is skewed to polar residues over residues Ala-881 to Pro-895 and Met-1085 to Asp-1094. Residue Thr-886 is modified to Phosphothreonine. A compositionally biased stretch (basic and acidic residues) spans Lys-1095 to Glu-1109.

The cofactor is Ca(2+). As to expression, preferentially expressed in the retina.

The protein resides in the cell membrane. The catalysed reaction is a 1,2-diacyl-sn-glycero-3-phospho-(1D-myo-inositol-4,5-bisphosphate) + H2O = 1D-myo-inositol 1,4,5-trisphosphate + a 1,2-diacyl-sn-glycerol + H(+). It carries out the reaction a 1,2-diacyl-sn-glycero-3-phospho-(1D-myo-inositol) + H2O = 1D-myo-inositol 1-phosphate + a 1,2-diacyl-sn-glycerol + H(+). Its function is as follows. Activated phosphatidylinositol-specific phospholipase C enzymes catalyze the production of the second messenger molecules diacylglycerol (DAG) and inositol 1,4,5-trisphosphate (IP3) involved in G-protein coupled receptor signaling pathways. PLCB4 is a direct effector of the endothelin receptor signaling pathway that plays an essential role in lower jaw and middle ear structures development. In Homo sapiens (Human), this protein is 1-phosphatidylinositol 4,5-bisphosphate phosphodiesterase beta-4.